Reading from the N-terminus, the 599-residue chain is UvrABC system protein C (599 aa).

A GIY-YIG domain is found at 15–93 (DNPGVYQYYD…IKTLQPRYNI (79 aa)). A UVR domain is found at 207–242 (KDSMKDFKKVMTNLAQNMHFEEAQKIKEKIEILENY).

It belongs to the UvrC family. As to quaternary structure, interacts with UvrB in an incision complex.

It is found in the cytoplasm. In terms of biological role, the UvrABC repair system catalyzes the recognition and processing of DNA lesions. UvrC both incises the 5' and 3' sides of the lesion. The N-terminal half is responsible for the 3' incision and the C-terminal half is responsible for the 5' incision. This chain is UvrABC system protein C, found in Flavobacterium psychrophilum (strain ATCC 49511 / DSM 21280 / CIP 103535 / JIP02/86).